We begin with the raw amino-acid sequence, 497 residues long: Gasdermin-E (497 aa).

The interval 1–56 (MFAKATRSFLREVDAEGDLIAVSNLNDSDKSQLLSLVTKKKRFWCWQRPKYQFLSV) is membrane targeting domain. S-(2-succinyl)cysteine is present on Cys-45. Lys-120 participates in a covalent cross-link: Glycyl lysine isopeptide (Lys-Gly) (interchain with G-Cter in ubiquitin). S-(2-succinyl)cysteine occurs at positions 156, 168, and 180. Residue Lys-189 forms a Glycyl lysine isopeptide (Lys-Gly) (interchain with G-Cter in ubiquitin) linkage. S-(2-succinyl)cysteine is present on residues Cys-235, Cys-371, Cys-409, Cys-418, and Cys-491.

This sequence belongs to the gasdermin family. Homooligomer; homooligomeric ring-shaped pore complex containing 27-28 subunits when inserted in the membrane. In terms of processing, cleavage at Asp-270 by CASP3 (mature and uncleaved precursor forms) or granzyme B (GZMB) relieves autoinhibition and is sufficient to initiate pyroptosis. Post-translationally, succination by the Krebs cycle intermediate fumarate, which leads to S-(2-succinyl)cysteine residues, inhibits processing by caspases, and ability to initiate pyroptosis. Succination modification is catalyzed by a non-enzymatic reaction caused by an accumulation of fumarate. Ubiquitinated on Lys-120 and Lys-189 via 'Lys-48'-linked polyubiquitin chains, leading to proteasomal degradation. Deubiquitinated by USP48, leading to increased stability. In terms of processing, palmitoylated.

The protein resides in the cell membrane. It localises to the cytoplasm. Its subcellular location is the cytosol. Its activity is regulated as follows. The full-length protein before cleavage is inactive: intramolecular interactions between N- and C-terminal domains mediate autoinhibition in the absence of activation signal. The intrinsic pyroptosis-inducing activity is carried by the released N-terminal moiety (Gasdermin-E, N-terminal) following cleavage by CASP3 or granzyme B (GZMB). Activated by NLRP1 in the absence of GSDMD expression: NLRP1 cleaves and activates CASP8, promoting downstream activation of CASP3 and subsequent activation of GSDME. Precursor of a pore-forming protein that converts non-inflammatory apoptosis to pyroptosis. This form constitutes the precursor of the pore-forming protein: upon cleavage, the released N-terminal moiety (Gasdermin-E, N-terminal) binds to membranes and forms pores, triggering pyroptosis. Functionally, pore-forming protein produced by cleavage by CASP3 or granzyme B (GZMB), which converts non-inflammatory apoptosis to pyroptosis or promotes granzyme-mediated pyroptosis, respectively. After cleavage, moves to the plasma membrane, homooligomerizes within the membrane and forms pores of 10-15 nanometers (nm) of inner diameter, allowing the release of mature interleukins (IL1B and IL16) and triggering pyroptosis. Binds to inner leaflet lipids, bisphosphorylated phosphatidylinositols, such as phosphatidylinositol (4,5)-bisphosphate. Cleavage by CASP3 switches CASP3-mediated apoptosis induced by TNF or danger signals, such as chemotherapy drugs, to pyroptosis. Mediates secondary necrosis downstream of the mitochondrial apoptotic pathway and CASP3 activation as well as in response to viral agents. Exhibits bactericidal activity. Cleavage by GZMB promotes tumor suppressor activity by triggering robust anti-tumor immunity. Suppresses tumors by mediating granzyme-mediated pyroptosis in target cells of natural killer (NK) cells: cleavage by granzyme B (GZMB), delivered to target cells from NK-cells, triggers pyroptosis of tumor cells and tumor suppression. May play a role in the p53/TP53-regulated cellular response to DNA damage. This chain is Gasdermin-E, found in Equus caballus (Horse).